A 414-amino-acid chain; its full sequence is 26S proteasome regulatory subunit 8 homolog (414 aa).

197 to 204 (GPPGTGKT) provides a ligand contact to ATP.

The protein belongs to the AAA ATPase family.

The protein resides in the cytoplasm. It localises to the nucleus. Functionally, the 26S proteasome is involved in the ATP-dependent degradation of ubiquitinated proteins. The regulatory (or ATPase) complex confers ATP dependency and substrate specificity to the 26S complex. The sequence is that of 26S proteasome regulatory subunit 8 homolog from Naegleria fowleri (Brain eating amoeba).